The sequence spans 422 residues: MDVLSPGQGNNTTSPPAPFETGGNTTGISDVTFSYQVITSLLLGTLIFCAVLGNACVVAAIALERSLQNVANYLIGSLAVTDLMVSVLVLPMAALYQVLNKWTLGQVTCDLFIALDVLCCTSSILHLCAIALDRYWAITDPIDYVNKRTPRRAAALISLTWLIGFLISIPPMLGWRTPEDRSDPDACTISKDHGYTIYSTFGAFYIPLLLMLVLYGRIFRAARFRIRKTVKKVEKTGADTRHGASPAPQPKKSVNGESGSRNWRLGVESKAGGALCANGAVRQGDDGAALEVIEVHRVGNSKEHLPLPSEAGPTPCAPASFERKNERNAEAKRKMALARERKTVKTLGIIMGTFILCWLPFFIVALVLPFCESSCHMPTLLGAIINWLGYSNSLLNPVIYAYFNKDFQNAFKKIIKCKFCRQ.

The segment at 1-23 (MDVLSPGQGNNTTSPPAPFETGG) is disordered. At 1-38 (MDVLSPGQGNNTTSPPAPFETGGNTTGISDVTFSYQVI) the chain is on the extracellular side. 3 N-linked (GlcNAc...) asparagine glycosylation sites follow: Asn10, Asn11, and Asn24. A helical transmembrane segment spans residues 39–59 (TSLLLGTLIFCAVLGNACVVA). The Cytoplasmic segment spans residues 60-73 (AIALERSLQNVANY). The chain crosses the membrane as a helical span at residues 74–98 (LIGSLAVTDLMVSVLVLPMAALYQV). The Extracellular segment spans residues 99–107 (LNKWTLGQV). A helical membrane pass occupies residues 108–132 (TCDLFIALDVLCCTSSILHLCAIAL). The cysteines at positions 109 and 187 are disulfide-linked. Serotonin contacts are provided by Asp116 and Cys120. Positions 133-135 (DRY) match the DRY motif; important for ligand-induced conformation changes motif. The Cytoplasmic segment spans residues 133–152 (DRYWAITDPIDYVNKRTPRR). The helical transmembrane segment at 153–174 (AAALISLTWLIGFLISIPPMLG) threads the bilayer. Residues 175-193 (WRTPEDRSDPDACTISKDH) are Extracellular-facing. A helical membrane pass occupies residues 194–216 (GYTIYSTFGAFYIPLLLMLVLYG). Residues 217–346 (RIFRAARFRI…LARERKTVKT (130 aa)) lie on the Cytoplasmic side of the membrane. The disordered stretch occupies residues 235-262 (KTGADTRHGASPAPQPKKSVNGESGSRN). 4 residues coordinate 1D-myo-inositol 4-phosphate: Thr314, Lys345, Thr346, and Gly352. Residues 347–370 (LGIIMGTFILCWLPFFIVALVLPF) traverse the membrane as a helical segment. Residues 371 to 378 (CESSCHMP) lie on the Extracellular side of the membrane. A helical membrane pass occupies residues 379–403 (TLLGAIINWLGYSNSLLNPVIYAYF). The NPxxY motif; important for ligand-induced conformation changes and signaling motif lies at 396 to 400 (NPVIY). Residues Phe403, Asn404, and Lys405 each coordinate 1D-myo-inositol 4-phosphate. The Cytoplasmic segment spans residues 404-422 (NKDFQNAFKKIIKCKFCRQ).

The protein belongs to the G-protein coupled receptor 1 family. 5-hydroxytryptamine receptor subfamily. HTR1A sub-subfamily. As to quaternary structure, heterodimer; heterodimerizes with GPER1. Interacts with YIF1B. Interacts with GPR39 and GALR1.

It localises to the cell membrane. The protein localises to the cell projection. It is found in the dendrite. With respect to regulation, G-protein coupled receptor activity is regulated by lipids: phosphatidylinositol 4-phosphate increases HTR1A-mediated activity. Its function is as follows. G-protein coupled receptor for 5-hydroxytryptamine (serotonin). Also functions as a receptor for various drugs and psychoactive substances. Ligand binding causes a conformation change that triggers signaling via guanine nucleotide-binding proteins (G proteins) and modulates the activity of downstream effectors, such as adenylate cyclase. HTR1A is coupled to G(i)/G(o) G alpha proteins and mediates inhibitory neurotransmission: signaling inhibits adenylate cyclase activity and activates a phosphatidylinositol-calcium second messenger system that regulates the release of Ca(2+) ions from intracellular stores. Beta-arrestin family members regulate signaling by mediating both receptor desensitization and resensitization processes. This chain is 5-hydroxytryptamine receptor 1A (HTR1A), found in Gorilla gorilla gorilla (Western lowland gorilla).